The following is a 236-amino-acid chain: MKYKLLPCLLAIFLTGCDRTEVTLSFTPEMASFSNEFDFDPLRGPVKDFTQTLMDEQGEVTKRVSGTLSEEGCFDSLELLDLENNTVVALVLDANYYRDAETLEKRVRLQGKCQLAELPSAGVSWETDDNGFVIKASSKQMQMEYRYDDQGYPLGKTTKSNDKTLSVSATPSTDPIKKLDYTAVTLLNNQRVGNVKQSCEYDSHANPVDCQLIIVDEGVKPAVERVYTIKNTIDYY.

A signal peptide spans 1-16 (MKYKLLPCLLAIFLTG). C17 is lipidated: N-palmitoyl cysteine. C17 carries the S-diacylglycerol cysteine lipid modification.

This sequence belongs to the UPF0257 family.

The protein resides in the cell membrane. This is UPF0257 lipoprotein YnfC (ynfC) from Shigella flexneri.